The primary structure comprises 873 residues: Zinc fingers and homeoboxes protein 1 (873 aa).

A disordered region spans residues leucine 24–asparagine 63. Threonine 36 is modified (phosphothreonine). A phosphoserine mark is found at serine 45, serine 47, and serine 48. C2H2-type zinc fingers lie at residues tyrosine 70 to histidine 93 and tyrosine 102 to histidine 125. Lysine 159 participates in a covalent cross-link: Glycyl lysine isopeptide (Lys-Gly) (interchain with G-Cter in SUMO2). Serine 202 bears the Phosphoserine mark. Positions serine 202 to threonine 236 are disordered. Over residues asparagine 212–isoleucine 221 the composition is skewed to basic and acidic residues. The span at glutamate 223 to threonine 236 shows a compositional bias: low complexity. The required for dimerization stretch occupies residues asparagine 272–proline 432. Positions asparagine 272–phenylalanine 564 are required for interaction with NFYA. Positions asparagine 284 to glutamate 346 form a DNA-binding region, homeobox 1. Residues lysine 441, lysine 454, lysine 485, and lysine 629 each participate in a glycyl lysine isopeptide (Lys-Gly) (interchain with G-Cter in SUMO2) cross-link. DNA-binding regions (homeobox) lie at residues serine 464–glutamine 526 and proline 569–methionine 630. 2 disordered regions span residues lysine 626–lysine 667 and serine 732–aspartate 770. Serine 648 is modified (phosphoserine). Positions serine 660–tryptophan 722 form a DNA-binding region, homeobox 4. The required for nuclear localization stretch occupies residues methionine 734–asparagine 768. Basic residues predominate over residues leucine 740–lysine 764. Residue serine 774 is modified to Phosphoserine. The homeobox 5 DNA-binding region spans lysine 777–phenylalanine 832. Residues isoleucine 829 to aspartate 873 form a disordered region. Over residues leucine 831–threonine 857 the composition is skewed to acidic residues. Residues leucine 831–aspartate 873 form a required for repressor activity region. Over residues histidine 863–aspartate 873 the composition is skewed to basic residues.

This sequence belongs to the ZHX family. In terms of assembly, forms homodimers. Heterodimer (via HD1 domain) with ZHX2 (via HD1 domain). Also forms a heterodimer with ZHX3 which is a prerequisite for repressor activity. Interacts with ATF7IP and NFYA. Interacts (via homeobox domains) with DNMT3B (via PWWP domain). In terms of tissue distribution, ubiquitously expressed. Expressed in podocytes.

Its subcellular location is the nucleus. Functionally, acts as a transcriptional repressor. Increases DNMT3B-mediated repressive transcriptional activity when DNMT3B is tethered to DNA. May link molecule between DNMT3B and other co-repressor proteins. The polypeptide is Zinc fingers and homeoboxes protein 1 (ZHX1) (Homo sapiens (Human)).